Reading from the N-terminus, the 208-residue chain is Large ribosomal subunit protein uL3 (208 aa).

Positions Gly116 to Pro146 are disordered.

Belongs to the universal ribosomal protein uL3 family. As to quaternary structure, part of the 50S ribosomal subunit. Forms a cluster with proteins L14 and L19.

Functionally, one of the primary rRNA binding proteins, it binds directly near the 3'-end of the 23S rRNA, where it nucleates assembly of the 50S subunit. The sequence is that of Large ribosomal subunit protein uL3 from Streptococcus mutans serotype c (strain ATCC 700610 / UA159).